A 445-amino-acid polypeptide reads, in one-letter code: Trigger factor (445 aa).

The PPIase FKBP-type domain maps to 164–249 (GDQVTFDFEG…VKKVEEAKLP (86 aa)).

It belongs to the FKBP-type PPIase family. Tig subfamily.

The protein resides in the cytoplasm. It catalyses the reaction [protein]-peptidylproline (omega=180) = [protein]-peptidylproline (omega=0). In terms of biological role, involved in protein export. Acts as a chaperone by maintaining the newly synthesized protein in an open conformation. Functions as a peptidyl-prolyl cis-trans isomerase. The sequence is that of Trigger factor from Psychrobacter sp. (strain PRwf-1).